The sequence spans 302 residues: Transmembrane protein 191C (302 aa).

Disordered stretches follow at residues 1–21 and 54–73; these read MAAT…GRQR and LRRR…EAAR. A coiled-coil region spans residues 5 to 160; the sequence is QELLLQLQKD…EKLQQDALQT (156 aa). Residues 238-258 traverse the membrane as a helical segment; sequence VLGALQVLLTLPLLFLGLSLL.

Belongs to the TMEM191 family.

The protein resides in the membrane. This is Transmembrane protein 191C from Homo sapiens (Human).